A 383-amino-acid chain; its full sequence is Cobalt-precorrin-5B C(1)-methyltransferase (383 aa).

Residues 1–24 (MQPSARRPFDLATPAPNGLRRGRT) are disordered.

This sequence belongs to the CbiD family.

It catalyses the reaction Co-precorrin-5B + S-adenosyl-L-methionine = Co-precorrin-6A + S-adenosyl-L-homocysteine. Its pathway is cofactor biosynthesis; adenosylcobalamin biosynthesis; cob(II)yrinate a,c-diamide from sirohydrochlorin (anaerobic route): step 6/10. Functionally, catalyzes the methylation of C-1 in cobalt-precorrin-5B to form cobalt-precorrin-6A. The chain is Cobalt-precorrin-5B C(1)-methyltransferase from Ralstonia nicotianae (strain ATCC BAA-1114 / GMI1000) (Ralstonia solanacearum).